Reading from the N-terminus, the 104-residue chain is L-rhamnose mutarotase (104 aa).

A substrate-binding site is contributed by Tyr18. His22 acts as the Proton donor in catalysis. Residues Tyr41 and Trp76–Trp77 each bind substrate.

This sequence belongs to the rhamnose mutarotase family. Homodimer.

It localises to the cytoplasm. The enzyme catalyses alpha-L-rhamnose = beta-L-rhamnose. The protein operates within carbohydrate metabolism; L-rhamnose metabolism. Functionally, involved in the anomeric conversion of L-rhamnose. The polypeptide is L-rhamnose mutarotase (Burkholderia ambifaria (strain ATCC BAA-244 / DSM 16087 / CCUG 44356 / LMG 19182 / AMMD) (Burkholderia cepacia (strain AMMD))).